Here is a 65-residue protein sequence, read N- to C-terminus: Photosystem II reaction center protein J (65 aa).

Basic and acidic residues predominate over residues 1–18 (MSSKLKGPDGRLPDRLPD). A disordered region spans residues 1-21 (MSSKLKGPDGRLPDRLPDGRP). Residues 36-56 (LWLVATAGGIAVIFVLGIFFY) traverse the membrane as a helical segment.

The protein belongs to the PsbJ family. In terms of assembly, PSII is composed of 1 copy each of membrane proteins PsbA, PsbB, PsbC, PsbD, PsbE, PsbF, PsbH, PsbI, PsbJ, PsbK, PsbL, PsbM, PsbT, PsbX, PsbY, Psb30/Ycf12, peripheral proteins PsbO, CyanoQ (PsbQ), PsbU, PsbV and a large number of cofactors. It forms dimeric complexes.

It localises to the cellular thylakoid membrane. In terms of biological role, one of the components of the core complex of photosystem II (PSII). PSII is a light-driven water:plastoquinone oxidoreductase that uses light energy to abstract electrons from H(2)O, generating O(2) and a proton gradient subsequently used for ATP formation. It consists of a core antenna complex that captures photons, and an electron transfer chain that converts photonic excitation into a charge separation. The polypeptide is Photosystem II reaction center protein J (Prochlorococcus marinus (strain SARG / CCMP1375 / SS120)).